Here is a 1058-residue protein sequence, read N- to C-terminus: Carbamoyl phosphate synthase large chain (1058 aa).

Positions 1–401 (MPKRKDIQKI…SLLKACRSLE (401 aa)) are carboxyphosphate synthetic domain. The ATP site is built by arginine 129, arginine 169, glycine 175, glycine 176, arginine 208, isoleucine 210, glutamate 215, glycine 241, isoleucine 242, histidine 243, glutamine 284, and glutamate 298. Positions 133 to 327 (KQLMQELDQP…IAKLAAKIAV (195 aa)) constitute an ATP-grasp 1 domain. Mg(2+) is bound by residues glutamine 284, glutamate 298, and asparagine 300. Positions 284, 298, and 300 each coordinate Mn(2+). Residues 402–546 (IGVCHNEMTS…YSTYELENES (145 aa)) form an oligomerization domain region. The carbamoyl phosphate synthetic domain stretch occupies residues 547–929 (VQSNKESILV…ALYKAFEANN (383 aa)). The region spanning 671–861 (EKALKELGIP…MAQIATKLIL (191 aa)) is the ATP-grasp 2 domain. The ATP site is built by arginine 707, serine 746, isoleucine 748, glutamate 752, glycine 777, valine 778, histidine 779, serine 780, glutamine 820, and glutamate 832. 3 residues coordinate Mg(2+): glutamine 820, glutamate 832, and asparagine 834. Residues glutamine 820, glutamate 832, and asparagine 834 each contribute to the Mn(2+) site. Positions 930–1058 (SHLSEFGQIV…ESRCFNIEAI (129 aa)) constitute an MGS-like domain. Residues 930–1058 (SHLSEFGQIV…ESRCFNIEAI (129 aa)) form an allosteric domain region.

This sequence belongs to the CarB family. As to quaternary structure, composed of two chains; the small (or glutamine) chain promotes the hydrolysis of glutamine to ammonia, which is used by the large (or ammonia) chain to synthesize carbamoyl phosphate. Tetramer of heterodimers (alpha,beta)4. Requires Mg(2+) as cofactor. The cofactor is Mn(2+).

The enzyme catalyses hydrogencarbonate + L-glutamine + 2 ATP + H2O = carbamoyl phosphate + L-glutamate + 2 ADP + phosphate + 2 H(+). It catalyses the reaction hydrogencarbonate + NH4(+) + 2 ATP = carbamoyl phosphate + 2 ADP + phosphate + 2 H(+). It participates in amino-acid biosynthesis; L-arginine biosynthesis; carbamoyl phosphate from bicarbonate: step 1/1. It functions in the pathway pyrimidine metabolism; UMP biosynthesis via de novo pathway; (S)-dihydroorotate from bicarbonate: step 1/3. Large subunit of the glutamine-dependent carbamoyl phosphate synthetase (CPSase). CPSase catalyzes the formation of carbamoyl phosphate from the ammonia moiety of glutamine, carbonate, and phosphate donated by ATP, constituting the first step of 2 biosynthetic pathways, one leading to arginine and/or urea and the other to pyrimidine nucleotides. The large subunit (synthetase) binds the substrates ammonia (free or transferred from glutamine from the small subunit), hydrogencarbonate and ATP and carries out an ATP-coupled ligase reaction, activating hydrogencarbonate by forming carboxy phosphate which reacts with ammonia to form carbamoyl phosphate. This chain is Carbamoyl phosphate synthase large chain, found in Streptococcus pyogenes serotype M6 (strain ATCC BAA-946 / MGAS10394).